The sequence spans 118 residues: Thioredoxin-like protein CXXS1 (118 aa).

The region spanning 2–110 (ARVVKIDSAE…IKKRVDGFVQ (109 aa)) is the Thioredoxin domain.

It belongs to the thioredoxin family. As to expression, ubiquitous.

Its subcellular location is the cytoplasm. Its function is as follows. Possesses low disulfide reductase activity, but efficient protein disulfide isomerase activity. Does not possess deglutathionylation activity. The polypeptide is Thioredoxin-like protein CXXS1 (CXXS1) (Arabidopsis thaliana (Mouse-ear cress)).